A 537-amino-acid chain; its full sequence is MGKNTKRNKKTKQQQQQPQQNGVTASASGTAVEDFEDQQAASSLPSLNGKKRSQLNKLVEELLDLVEKQPANPNEEWKQYGQLQELLKQIMILEEPLSQAVCPQISDSPDDQTRLAKVEAFSAWAKDGGVHSEGLEIAIFPGYQLGLRATRPLAKDELVLSVPRKLILSEENNSDCRLFGKMTQATHLNLAYDLVIEKIRGEFSEWRPYIDVLPAKYNTVLYFTTKQMELLRGTAAAALAMRQCRVIAKQYAFLYKYAHTMTEPSTGNRSHPGERGLFFTQHGLCYKLYRWAVSTVMTRQNLVPSEKQESEDGPKLISALIPYWDMANHRPGKITSFYATVSRQLECTAQEAVNTGEQFFIYYGDRSNTDLLVHNGFVDPNNTKDYVNIRVGLSLTDALAAKRASILDKLNIRHTAELRVLPAPDFISKELLAFVRVFKMSAEQLDHWCSDLDRAGDLLHIDCALETDHETRTWQFLEDRLKLLLAVFNKEMHEADEVKELELKDGQEIELMLFLYRRLERSILAGALQYAQEHRKV.

Residues 1–12 (MGKNTKRNKKTK) are compositionally biased toward basic residues. The interval 1-50 (MGKNTKRNKKTKQQQQQPQQNGVTASASGTAVEDFEDQQAASSLPSLNGK) is disordered. S-adenosyl-L-methionine-binding positions include R114, 143 to 145 (YQL), R299, 325 to 329 (DMANH), and 375 to 377 (NGF). The SET domain maps to 133-364 (EGLEIAIFPG…TGEQFFIYYG (232 aa)).

It belongs to the class V-like SAM-binding methyltransferase superfamily. SETD3 actin-histidine methyltransferase family.

The protein resides in the cytoplasm. It localises to the nucleus. The enzyme catalyses L-histidyl-[protein] + S-adenosyl-L-methionine = N(tele)-methyl-L-histidyl-[protein] + S-adenosyl-L-homocysteine + H(+). Protein-histidine N-methyltransferase that specifically mediates 3-methylhistidine (tele-methylhistidine) methylation of actin at 'His-74'. This is Actin-histidine N-methyltransferase from Drosophila melanogaster (Fruit fly).